Consider the following 231-residue polypeptide: Cytochrome c oxidase subunit 2 (231 aa).

Residues 1–14 lie on the Mitochondrial intermembrane side of the membrane; it reads MAHPSQLGLQDAAS. Residues 15 to 45 traverse the membrane as a helical segment; the sequence is PVMEELLHFHDHALMIVFLISTLVFYIILAM. At 46–59 the chain is on the mitochondrial matrix side; the sequence is MTTKMTDKYILDAQ. The helical transmembrane segment at 60–87 threads the bilayer; sequence EIEIVWTLLPAIVLILVALPSLRILYLI. Residues 88–231 are Mitochondrial intermembrane-facing; sequence DEVENPHLTI…WSSSMLEEAX (144 aa). Cu cation-binding residues include H161, C196, E198, C200, H204, and M207. Position 198 (E198) interacts with Mg(2+).

It belongs to the cytochrome c oxidase subunit 2 family. As to quaternary structure, component of the cytochrome c oxidase (complex IV, CIV), a multisubunit enzyme composed of 14 subunits. The complex is composed of a catalytic core of 3 subunits MT-CO1, MT-CO2 and MT-CO3, encoded in the mitochondrial DNA, and 11 supernumerary subunits COX4I, COX5A, COX5B, COX6A, COX6B, COX6C, COX7A, COX7B, COX7C, COX8 and NDUFA4, which are encoded in the nuclear genome. The complex exists as a monomer or a dimer and forms supercomplexes (SCs) in the inner mitochondrial membrane with NADH-ubiquinone oxidoreductase (complex I, CI) and ubiquinol-cytochrome c oxidoreductase (cytochrome b-c1 complex, complex III, CIII), resulting in different assemblies (supercomplex SCI(1)III(2)IV(1) and megacomplex MCI(2)III(2)IV(2)). Found in a complex with TMEM177, COA6, COX18, COX20, SCO1 and SCO2. Interacts with TMEM177 in a COX20-dependent manner. Interacts with COX20. Interacts with COX16. Cu cation is required as a cofactor.

It is found in the mitochondrion inner membrane. The catalysed reaction is 4 Fe(II)-[cytochrome c] + O2 + 8 H(+)(in) = 4 Fe(III)-[cytochrome c] + 2 H2O + 4 H(+)(out). Functionally, component of the cytochrome c oxidase, the last enzyme in the mitochondrial electron transport chain which drives oxidative phosphorylation. The respiratory chain contains 3 multisubunit complexes succinate dehydrogenase (complex II, CII), ubiquinol-cytochrome c oxidoreductase (cytochrome b-c1 complex, complex III, CIII) and cytochrome c oxidase (complex IV, CIV), that cooperate to transfer electrons derived from NADH and succinate to molecular oxygen, creating an electrochemical gradient over the inner membrane that drives transmembrane transport and the ATP synthase. Cytochrome c oxidase is the component of the respiratory chain that catalyzes the reduction of oxygen to water. Electrons originating from reduced cytochrome c in the intermembrane space (IMS) are transferred via the dinuclear copper A center (CU(A)) of subunit 2 and heme A of subunit 1 to the active site in subunit 1, a binuclear center (BNC) formed by heme A3 and copper B (CU(B)). The BNC reduces molecular oxygen to 2 water molecules using 4 electrons from cytochrome c in the IMS and 4 protons from the mitochondrial matrix. The protein is Cytochrome c oxidase subunit 2 (MT-CO2) of Latimeria chalumnae (Coelacanth).